The primary structure comprises 618 residues: Delta-like protein 3 (618 aa).

An N-terminal signal peptide occupies residues 1–26; the sequence is MVSPRMSGLLSQTVILALIFLPQTRP. Over 27-492 the chain is Extracellular; sequence AGVFELQIHS…LRPGDPQRYL (466 aa). The DSL domain occupies 176 to 215; that stretch reads ARCEPPAVGTACTRLCRPRSAPSRCGPGLRPCAPLEDECE. 6 EGF-like domains span residues 216–249, 274–310, 312–351, 353–389, 391–427, and 429–465; these read APLV…PLCT, GPGP…LRCE, SGVT…SNCE, RVDR…PRCE, DLDD…RDCR, and RADP…ARCE. Cystine bridges form between C220-C231, C224-C237, C239-C248, C278-C289, C283-C298, C300-C309, C316-C327, C321-C339, C341-C350, C357-C368, C362-C377, C379-C388, C395-C406, C400-C415, C417-C426, C433-C444, C438-C453, and C455-C464. A helical transmembrane segment spans residues 493–513; sequence LPPALGLLVAAGVAGAALLLV. Over 514–618 the chain is Cytoplasmic; the sequence is HVRRRGHSQD…PYPSSILSVK (105 aa). The span at 546–562 shows a compositional bias: polar residues; the sequence is NLRTQEGSGDGPSSSVD. Residues 546-566 form a disordered region; the sequence is NLRTQEGSGDGPSSSVDWNRP.

In terms of assembly, can bind and activate Notch-1 or another Notch receptor. Post-translationally, ubiquitinated by MIB (MIB1 or MIB2), leading to its endocytosis and subsequent degradation.

The protein resides in the membrane. Functionally, inhibits primary neurogenesis. May be required to divert neurons along a specific differentiation pathway. Plays a role in the formation of somite boundaries during segmentation of the paraxial mesoderm. In Homo sapiens (Human), this protein is Delta-like protein 3 (DLL3).